Consider the following 579-residue polypeptide: Potassium-transporting ATPase potassium-binding subunit (579 aa).

Helical transmembrane passes span 1–21 (MISNSVIQIGIFLVVLMACVV), 64–84 (HYALALLGFNAMGMLLLYGLQ), 135–155 (GLTVQNFVSAATGMAVLIGLI), 178–198 (IYILLPLALVLSVTLVSQGVV), 265–285 (FLELLSILLIPAALCYTFGLM), 293–313 (WAILATMTIILLGFTVLAVSA), 398–418 (GLYGMLIFAIIAVFVAGLMVG), 435–455 (MAALIILIPCVMTLLITAIAV), 503–523 (WLGIAMLVSRFWLIVPTLAIA), and 549–569 (LLIGVVLIVGALTFIPALALG).

It belongs to the KdpA family. The system is composed of three essential subunits: KdpA, KdpB and KdpC.

Its subcellular location is the cell membrane. In terms of biological role, part of the high-affinity ATP-driven potassium transport (or Kdp) system, which catalyzes the hydrolysis of ATP coupled with the electrogenic transport of potassium into the cytoplasm. This subunit binds the extracellular potassium ions and delivers the ions to the membrane domain of KdpB through an intramembrane tunnel. This Herpetosiphon aurantiacus (strain ATCC 23779 / DSM 785 / 114-95) protein is Potassium-transporting ATPase potassium-binding subunit.